Consider the following 199-residue polypeptide: uncharacterized protein (199 aa).

A coiled-coil region spans residues 71–104 (RANATNKLTVIAEQIQHLQEQARKVLEDARRDAD).

This is an uncharacterized protein from Mus musculus (Mouse).